The primary structure comprises 397 residues: Phosphoglycerate kinase (397 aa).

Substrate is bound by residues Asp21 to Asn23, Arg36, His59 to Arg62, Arg118, and Arg151. ATP is bound by residues Lys201, Glu323, and Gly353–Thr356.

The protein belongs to the phosphoglycerate kinase family. In terms of assembly, monomer.

The protein localises to the cytoplasm. The enzyme catalyses (2R)-3-phosphoglycerate + ATP = (2R)-3-phospho-glyceroyl phosphate + ADP. It participates in carbohydrate degradation; glycolysis; pyruvate from D-glyceraldehyde 3-phosphate: step 2/5. The protein is Phosphoglycerate kinase of Bartonella quintana (strain Toulouse) (Rochalimaea quintana).